Consider the following 615-residue polypeptide: Mitogen-activated protein kinase 18 (615 aa).

The 292-residue stretch at 25-316 (YRILEVIGKG…PAEALADPYF (292 aa)) folds into the Protein kinase domain. ATP is bound by residues 31 to 39 (IGKGSYGVV) and Lys54. Residue Asp151 is the Proton acceptor of the active site. A Phosphothreonine modification is found at Thr187. Residues 187-189 (TDY) carry the TXY motif. Residue Tyr189 is modified to Phosphotyrosine. At Thr192 the chain carries Phosphothreonine. Disordered stretches follow at residues 414–483 (RSTV…ESSV) and 510–544 (NTMTNPENRNIEASSFPPKPQNPVHQFSPTEPPAA). Positions 415 to 426 (STVHSTVVHSTS) are enriched in low complexity. Residues 445–459 (NGASSAGHPSTSAYP) are compositionally biased toward polar residues. The span at 464-473 (GPPPRVPPSG) shows a compositional bias: pro residues. Composition is skewed to polar residues over residues 510-522 (NTMTNPENRNIEA) and 532-544 (PVHQFSPTEPPAA).

It belongs to the protein kinase superfamily. CMGC Ser/Thr protein kinase family. MAP kinase subfamily. As to quaternary structure, interacts with PHS1. Binds to MAPKKK20. Dually phosphorylated on Thr-187 and Tyr-189, which activates the enzyme. Phosphorylated by MAPKKK20. As to expression, expressed in roots, seedlings, leaves, flower buds, flowers and siliques.

It is found in the nucleus. It localises to the cytoplasm. The enzyme catalyses L-seryl-[protein] + ATP = O-phospho-L-seryl-[protein] + ADP + H(+). It carries out the reaction L-threonyl-[protein] + ATP = O-phospho-L-threonyl-[protein] + ADP + H(+). Activated by threonine and tyrosine phosphorylation. Inactivated by phosphatase PHS1. In terms of biological role, mitogen-activated protein kinase (MAPK) that is specifically regulated by PHS1 and MAPKKK20 and mediates signaling that regulates cortical microtubule functions, maybe through regulation of microtubule dynamic instability. The chain is Mitogen-activated protein kinase 18 from Arabidopsis thaliana (Mouse-ear cress).